A 482-amino-acid chain; its full sequence is Adenylyltransferase and sulfurtransferase uba4 (482 aa).

Positions glutamate 33–serine 57 are disordered. The span at alanine 39–arginine 54 shows a compositional bias: polar residues. ATP is bound by residues glycine 98, aspartate 119, serine 126 to arginine 130, lysine 143, and aspartate 187 to asparagine 188. Zn(2+)-binding residues include cysteine 236 and cysteine 239. The active-site Glycyl thioester intermediate; for adenylyltransferase activity is the cysteine 253. Positions 315 and 318 each coordinate Zn(2+). The region spanning alanine 366–proline 480 is the Rhodanese domain. The active-site Cysteine persulfide intermediate; for sulfurtransferase activity is cysteine 435.

The protein in the N-terminal section; belongs to the HesA/MoeB/ThiF family. UBA4 subfamily. Zn(2+) is required as a cofactor.

It is found in the cytoplasm. Its subcellular location is the cytosol. It catalyses the reaction [molybdopterin-synthase sulfur-carrier protein]-C-terminal Gly-Gly + ATP + H(+) = [molybdopterin-synthase sulfur-carrier protein]-C-terminal Gly-Gly-AMP + diphosphate. The catalysed reaction is [molybdopterin-synthase sulfur-carrier protein]-C-terminal Gly-Gly-AMP + S-sulfanyl-L-cysteinyl-[cysteine desulfurase] + AH2 = [molybdopterin-synthase sulfur-carrier protein]-C-terminal-Gly-aminoethanethioate + L-cysteinyl-[cysteine desulfurase] + A + AMP + 2 H(+). Its pathway is tRNA modification; 5-methoxycarbonylmethyl-2-thiouridine-tRNA biosynthesis. The protein operates within cofactor biosynthesis; molybdopterin biosynthesis. In terms of biological role, plays a central role in 2-thiolation of mcm(5)S(2)U at tRNA wobble positions of cytosolic tRNA(Lys), tRNA(Glu) and tRNA(Gln). Also essential during biosynthesis of the molybdenum cofactor. Acts by mediating the C-terminal thiocarboxylation of sulfur carriers urm1 and mocs2a. Its N-terminus first activates urm1 and mocs2a as acyl-adenylates (-COAMP), then the persulfide sulfur on the catalytic cysteine is transferred to urm1 and mocs2a to form thiocarboxylation (-COSH) of their C-terminus. The reaction probably involves hydrogen sulfide that is generated from the persulfide intermediate and that acts as a nucleophile towards urm1 and mocs2a. Subsequently, a transient disulfide bond is formed. Does not use thiosulfate as sulfur donor; nfs1 probably acting as a sulfur donor for thiocarboxylation reactions. This chain is Adenylyltransferase and sulfurtransferase uba4, found in Emericella nidulans (strain FGSC A4 / ATCC 38163 / CBS 112.46 / NRRL 194 / M139) (Aspergillus nidulans).